Reading from the N-terminus, the 378-residue chain is Histidinol-phosphate aminotransferase 2 (378 aa).

At Lys240 the chain carries N6-(pyridoxal phosphate)lysine.

This sequence belongs to the class-II pyridoxal-phosphate-dependent aminotransferase family. Histidinol-phosphate aminotransferase subfamily. Homodimer. Pyridoxal 5'-phosphate serves as cofactor.

The catalysed reaction is L-histidinol phosphate + 2-oxoglutarate = 3-(imidazol-4-yl)-2-oxopropyl phosphate + L-glutamate. The protein operates within amino-acid biosynthesis; L-histidine biosynthesis; L-histidine from 5-phospho-alpha-D-ribose 1-diphosphate: step 7/9. This Caulobacter vibrioides (strain ATCC 19089 / CIP 103742 / CB 15) (Caulobacter crescentus) protein is Histidinol-phosphate aminotransferase 2 (hisC2).